A 364-amino-acid chain; its full sequence is Histidinol-phosphate aminotransferase 2 (364 aa).

Residue lysine 223 is modified to N6-(pyridoxal phosphate)lysine.

This sequence belongs to the class-II pyridoxal-phosphate-dependent aminotransferase family. Histidinol-phosphate aminotransferase subfamily. In terms of assembly, homodimer. Requires pyridoxal 5'-phosphate as cofactor.

The enzyme catalyses L-histidinol phosphate + 2-oxoglutarate = 3-(imidazol-4-yl)-2-oxopropyl phosphate + L-glutamate. Its pathway is amino-acid biosynthesis; L-histidine biosynthesis; L-histidine from 5-phospho-alpha-D-ribose 1-diphosphate: step 7/9. The chain is Histidinol-phosphate aminotransferase 2 (hisC2) from Oceanobacillus iheyensis (strain DSM 14371 / CIP 107618 / JCM 11309 / KCTC 3954 / HTE831).